The following is a 187-amino-acid chain: Transcriptional repressor NrdR (187 aa).

The tract at residues 1–21 (MQCPYCQHTNSRVLESRSSEG) is disordered. A zinc finger spans residues 3-34 (CPYCQHTNSRVLESRSSEGGQSIRRRRECLNC). In terms of domain architecture, ATP-cone spans 49–139 (ITVIKHDGKK…VYGRFKGIKD (91 aa)). Polar residues-rich tracts occupy residues 152-162 (ISSPMSQWSKS) and 170-187 (SQTS…ENSR). Residues 152-187 (ISSPMSQWSKSSTRDRDQSQTSPCLSLTHNGSENSR) are disordered.

This sequence belongs to the NrdR family. It depends on Zn(2+) as a cofactor.

In terms of biological role, negatively regulates transcription of bacterial ribonucleotide reductase nrd genes and operons by binding to NrdR-boxes. The sequence is that of Transcriptional repressor NrdR from Crocosphaera subtropica (strain ATCC 51142 / BH68) (Cyanothece sp. (strain ATCC 51142)).